The following is a 513-amino-acid chain: uncharacterized protein (513 aa).

It belongs to the NodU/CmcH family.

This is an uncharacterized protein from Methanocaldococcus jannaschii (strain ATCC 43067 / DSM 2661 / JAL-1 / JCM 10045 / NBRC 100440) (Methanococcus jannaschii).